Consider the following 579-residue polypeptide: Suppressor of cytokine signaling 7 (579 aa).

Disordered stretches follow at residues 1–25 (MVFR…GPSE), 89–270 (PPPP…RTQS), and 295–315 (QRGL…RSLS). Pro residues-rich tracts occupy residues 89–99 (PPPPQPPPPAA), 155–165 (PPGPELPPVPF), and 185–196 (QPPPPPPPPGPL). Positions 124–492 (AESLETNSCS…GKFLYFLRSR (369 aa)) are mediates interaction with SORBS3. The segment covering 206–217 (GSFKIRLSRLFR) has biased composition (basic residues). The segment covering 301 to 311 (PHPPTPPPPPR) has biased composition (pro residues). One can recognise an SH2 domain in the interval 398 to 507 (WYWGPMNWED…PTPVQLLYPV (110 aa)). An SOCS box domain is found at 502–552 (QLLYPVSRFSNVKSLQHLCRFRIRQLVRIDHIPDLPLPKPLISYIRKFYYY).

Substrate-recognition component of the ECS(SOCS7) complex, composed of SOCS7, CUL5, ELOB, ELOC and RNF7/RBX2. Interacts, via the third proline-rich region, with the second SH3 domain of the adapter protein NCK1. Also interacts with GRB2, INSR, PLCG1, SORBS3/vinexin, and phosphorylated STAT3 and STAT5. Interacts with SEPT6. Interacts with phosphorylated IRS4 and PIK3R1. Widely expressed with higher expression in brain and testis where it is expressed by spermatocytes and early spermatids. Also significantly expressed in spleen, skeletal muscle and kidney.

The protein localises to the cytoplasm. It is found in the nucleus. The protein resides in the cell membrane. It functions in the pathway protein modification; protein ubiquitination. Substrate-recognition component of a cullin-5-RING E3 ubiquitin-protein ligase complex (ECS complex, also named CRL5 complex), which mediates the ubiquitination and subsequent proteasomal degradation of target proteins, such as DAB1 and IRS1. Specifically recognizes and binds phosphorylated proteins via its SH2 domain, promoting their ubiquitination. The ECS(SOCS7) complex acts as a key regulator of reelin signaling by mediating ubiquitination and degradation of phosphorylated DAB1 in the cortical plate of the developing cerebral cortex, thereby regulating neuron positioning during cortex development. Functions in insulin signaling and glucose homeostasis through IRS1 ubiquitination and subsequent proteasomal degradation. Also inhibits prolactin, growth hormone and leptin signaling by preventing STAT3 and STAT5 activation, sequestering them in the cytoplasm and reducing their binding to DNA. This is Suppressor of cytokine signaling 7 from Mus musculus (Mouse).